The primary structure comprises 523 residues: 2-isopropylmalate synthase (523 aa).

Residues 5-267 (VIIFDTTLRD…HTAINHQEIW (263 aa)) enclose the Pyruvate carboxyltransferase domain. Residues D14, H202, H204, and N238 each contribute to the Mn(2+) site. The interval 392 to 523 (RLDYFSVQSS…QHNENNKETV (132 aa)) is regulatory domain.

This sequence belongs to the alpha-IPM synthase/homocitrate synthase family. LeuA type 1 subfamily. In terms of assembly, homodimer. Requires Mn(2+) as cofactor.

The protein resides in the cytoplasm. It carries out the reaction 3-methyl-2-oxobutanoate + acetyl-CoA + H2O = (2S)-2-isopropylmalate + CoA + H(+). Its pathway is amino-acid biosynthesis; L-leucine biosynthesis; L-leucine from 3-methyl-2-oxobutanoate: step 1/4. In terms of biological role, catalyzes the condensation of the acetyl group of acetyl-CoA with 3-methyl-2-oxobutanoate (2-ketoisovalerate) to form 3-carboxy-3-hydroxy-4-methylpentanoate (2-isopropylmalate). This is 2-isopropylmalate synthase from Shigella dysenteriae serotype 1 (strain Sd197).